Reading from the N-terminus, the 753-residue chain is Putative cyclic nucleotide-gated ion channel 8 (753 aa).

Over 1 to 111 (MYKSQYISGH…DKTLLLWNRM (111 aa)) the chain is Cytoplasmic. Residues 112–132 (FVISCILAVSVDPLFFYLPIV) form a helical membrane-spanning segment. Topologically, residues 133 to 145 (DNSKNCIGIDSKL) are extracellular. Residues 146 to 166 (AVTTTTLRTIIDVFYLTRMAL) form a helical membrane-spanning segment. The Cytoplasmic portion of the chain corresponds to 167-199 (QFRTAYIAPSSRVFGRGELVIDPAKIAERYLTR). The chain crosses the membrane as a helical span at residues 200 to 220 (YFIVDFLAVLPLPQIAVWKFL). At 221-233 (HGSKGTDVLPTKQ) the chain is on the extracellular side. A helical membrane pass occupies residues 234–254 (ALLHIVITQYIPRFVRFIPLT). At 255 to 274 (SELKKTAGAFAEGAWAGAAY) the chain is on the cytoplasmic side. Residues 275-295 (YLLWYMLASHITGAFWYMLSV) form a helical membrane-spanning segment. Topologically, residues 296-402 (ERNDTCLRSA…QGLQTSTYPG (107 aa)) are extracellular. Residues 403–423 (EVLFSIAIAVAGLLLFALLIG) form a helical membrane-spanning segment. Residues 424–753 (NMQTYLQSLT…FEALDTDDLN (330 aa)) are Cytoplasmic-facing. A nucleoside 3',5'-cyclic phosphate-binding positions include 508 to 638 (LFAN…TFRF) and E579. The segment at 624 to 639 (FRRLHSRQVQQTFRFY) is calmodulin-binding. One can recognise an IQ domain in the interval 644-673 (RTWAACFIQAAWRRHLRRKIAELRRKEEEE). Residues 731-753 (KSLMNLTKPSEPDFEALDTDDLN) form a disordered region. Acidic residues predominate over residues 742–753 (PDFEALDTDDLN).

This sequence belongs to the cyclic nucleotide-gated cation channel (TC 1.A.1.5) family. As to quaternary structure, homotetramer or heterotetramer.

The protein resides in the cell membrane. In terms of biological role, putative cyclic nucleotide-gated ion channel. The polypeptide is Putative cyclic nucleotide-gated ion channel 8 (CNGC8) (Arabidopsis thaliana (Mouse-ear cress)).